We begin with the raw amino-acid sequence, 63 residues long: MVFQVVCSTCGKDISHERYKLIIRKKSLKDVLVSVKNKCCRLKLSTQIEPQRNLTVQPLLDIN.

The protein belongs to the poxviridae DNA-directed RNA polymerase 7 kDa subunit family. In terms of assembly, the DNA-dependent RNA polymerase (vRNAP) consists of eight subunits encoded by early viral genes and termed according to their apparent molecular masses Rpo147, Rpo132, Rpo35, Rpo30, Rpo22, Rpo19, Rpo18, and Rpo7. The same holoenzyme, with the addition of the transcription-specificity factor RAP94, is used for early gene expression.

The protein resides in the virion. It catalyses the reaction RNA(n) + a ribonucleoside 5'-triphosphate = RNA(n+1) + diphosphate. Functionally, part of the DNA-dependent RNA polymerase which catalyzes the transcription of viral DNA into RNA using the four ribonucleoside triphosphates as substrates. Responsible for the transcription of early, intermediate and late genes. DNA-dependent RNA polymerase associates with the early transcription factor (ETF), itself composed of OPG118 and OPG134, thereby allowing the early genes transcription. Late transcription, and probably also intermediate transcription, require newly synthesized RNA polymerase. In Homo sapiens (Human), this protein is DNA-directed RNA polymerase 7 kDa subunit (OPG090).